Here is a 198-residue protein sequence, read N- to C-terminus: Hookworm platelet inhibitor 1 (198 aa).

Positions 1 to 17 are cleaved as a signal peptide; sequence MSSYLLVLVAILGFAYA. 5 disulfides stabilise this stretch: Cys24-Cys65, Cys78-Cys146, Cys141-Cys154, Cys174-Cys186, and Cys177-Cys195.

This sequence belongs to the CRISP family. Monomer. In terms of tissue distribution, detected in cephalic glands.

Its subcellular location is the secreted. Functionally, hookworms inhibitor of platelet aggregation and adhesion. Native protein inhibits platelet aggregation induced by ADP, epinephrine, and thrombin. In addition, it prevents adhesion of resting platelets to immobilized fibrinogen and collagen. May act by binding to glycoprotein IIb/IIIa (ITGA2B/ITGB3) and integrin alpha-2/beta-1 (ITGA1/ITGB1), respectively. It is noteworthy that the recombinant protein fails to inhibit binding to fibrinogen (through ITGA2B/ITGB3) and collagen (through ITGA1/ITGB1). The chain is Hookworm platelet inhibitor 1 from Ancylostoma caninum (Dog hookworm).